A 275-amino-acid chain; its full sequence is Gamma carbonic anhydrase 1, mitochondrial (275 aa).

Residues 1 to 43 (MGTLGRAFYSVGFWIRETGQALDRLGCRLQGKNYFREQLSRHR) constitute a mitochondrion transit peptide. Residues 86 to 88 (RGD) and 101 to 102 (QD) each bind substrate. Histidine 107, histidine 130, and histidine 135 together coordinate Zn(2+). Residue asparagine 209 coordinates substrate. The segment at 256–275 (LNLPNNILPDKETKRPSNVN) is disordered. Basic and acidic residues predominate over residues 264–275 (PDKETKRPSNVN).

The protein belongs to the gamma-class carbonic anhydrase family. In terms of assembly, homotrimer. Component of the mitochondrial oxidoreductase respiratory chain complex I; element of the extra matrix-exposed domain, which is attached to the membrane arm of this complex. Zn(2+) serves as cofactor.

The protein localises to the mitochondrion membrane. In terms of biological role, enzyme involved in the catabolism of H(2)CO(3) but that does not mediates the reversible hydration of carbon dioxide. Mediates complex I assembly in mitochondria and respiration. This is Gamma carbonic anhydrase 1, mitochondrial (GAMMACA1) from Arabidopsis thaliana (Mouse-ear cress).